We begin with the raw amino-acid sequence, 187 residues long: Putative glutathione-dependent formaldehyde-activating enzyme (187 aa).

A CENP-V/GFA domain is found at 20–166 (FPGGKLYCHC…FESVGLKTYD (147 aa)). Zn(2+) contacts are provided by Cys27, Cys29, Cys48, Cys50, Cys53, Cys95, and Cys98.

It belongs to the Gfa family. It depends on Zn(2+) as a cofactor.

The enzyme catalyses S-(hydroxymethyl)glutathione = glutathione + formaldehyde. The protein operates within one-carbon metabolism; formaldehyde degradation; formate from formaldehyde (glutathione route): step 1/3. In terms of biological role, catalyzes the condensation of formaldehyde and glutathione to S-hydroxymethylglutathione. This Talaromyces marneffei (strain ATCC 18224 / CBS 334.59 / QM 7333) (Penicillium marneffei) protein is Putative glutathione-dependent formaldehyde-activating enzyme.